The chain runs to 157 residues: DNA gyrase inhibitor (157 aa).

The protein belongs to the DNA gyrase inhibitor family. Interacts with DNA gyrase.

It is found in the cytoplasm. In terms of biological role, inhibits the supercoiling activity of DNA gyrase. Acts by inhibiting DNA gyrase at an early step, prior to (or at the step of) binding of DNA by the gyrase. It protects cells against toxins that target DNA gyrase, by inhibiting activity of these toxins and reducing the formation of lethal double-strand breaks in the cell. The polypeptide is DNA gyrase inhibitor (Enterobacter lignolyticus (strain SCF1)).